We begin with the raw amino-acid sequence, 380 residues long: Erythronate-4-phosphate dehydrogenase (380 aa).

Residues serine 45 and threonine 66 each contribute to the substrate site. Residues aspartate 146, threonine 174, 205 to 207 (ASR), and aspartate 231 contribute to the NAD(+) site. Arginine 207 is a catalytic residue. Glutamate 236 is a catalytic residue. The active-site Proton donor is the histidine 253. NAD(+) is bound at residue glycine 256. Tyrosine 257 is a substrate binding site.

Belongs to the D-isomer specific 2-hydroxyacid dehydrogenase family. PdxB subfamily. As to quaternary structure, homodimer.

It is found in the cytoplasm. The catalysed reaction is 4-phospho-D-erythronate + NAD(+) = (R)-3-hydroxy-2-oxo-4-phosphooxybutanoate + NADH + H(+). The protein operates within cofactor biosynthesis; pyridoxine 5'-phosphate biosynthesis; pyridoxine 5'-phosphate from D-erythrose 4-phosphate: step 2/5. Functionally, catalyzes the oxidation of erythronate-4-phosphate to 3-hydroxy-2-oxo-4-phosphonooxybutanoate. This chain is Erythronate-4-phosphate dehydrogenase, found in Pseudomonas putida (strain W619).